We begin with the raw amino-acid sequence, 225 residues long: MSENERGTQLTEEEKEELQRGEKGAIIELLVPLENYLSAGVHIGTHTCTRYMERFIYRVRPEGLYVLDVRKIDERLRVAAKFLSRFQPQSILAVASRPYAFTPVQKFAEVVGARAVVGRMVPGMLTNPYLEDFIEPEVLLVSDPRTDTQAIKEAADMGIPVVAFSDTDAKVDYVDLVIPSNNKGRKSLALLYWALARQILRERKEIAPDADIPVKVEEFEVKLSQ.

This sequence belongs to the universal ribosomal protein uS2 family.

The chain is Small ribosomal subunit protein uS2 from Metallosphaera sedula (strain ATCC 51363 / DSM 5348 / JCM 9185 / NBRC 15509 / TH2).